The sequence spans 972 residues: Mast/stem cell growth factor receptor Kit (972 aa).

A signal peptide spans 1–25 (MRGARGAWDFLCVLLLLLRVQTGSS). At 26–520 (QPSVSPEEAS…QIQPHTLFTP (495 aa)) the chain is on the extracellular side. Ig-like C2-type domains follow at residues 27-112 (PSVS…VFVR), 121-205 (DRSL…LKVR), 212-308 (PVVS…LEVV), 317-410 (PMIN…VYVN), and 413-507 (PEIL…FNFA). A disulfide bridge links cysteine 58 with cysteine 97. N-linked (GlcNAc...) asparagine glycans are attached at residues asparagine 130 and asparagine 145. Disulfide bonds link cysteine 136/cysteine 186, cysteine 151/cysteine 183, and cysteine 233/cysteine 290. Residues asparagine 283, asparagine 300, asparagine 320, asparagine 352, asparagine 367, asparagine 463, and asparagine 486 are each glycosylated (N-linked (GlcNAc...) asparagine). Residues cysteine 428 and cysteine 491 are joined by a disulfide bond. The chain crosses the membrane as a helical span at residues 521–541 (LLIGFVVVAGMMCIIVMILTY). Residues 542-972 (KYLQKPMYEV…SQPLLVRDDV (431 aa)) are Cytoplasmic-facing. A phosphotyrosine mark is found at tyrosine 543 and tyrosine 549. Tyrosine 564 contributes to the Mg(2+) binding site. 2 positions are modified to phosphotyrosine; by autocatalysis: tyrosine 564 and tyrosine 566. Residues 564–566 (YVY) are important for interaction with phosphotyrosine-binding proteins. In terms of domain architecture, Protein kinase spans 585-933 (LSFGKTLGAG…ISESTNHIYS (349 aa)). ATP contacts are provided by residues 592 to 599 (GAGAFGKV), lysine 619, and 667 to 673 (EYCCYGD). Tyrosine 699 and tyrosine 717 each carry phosphotyrosine; by autocatalysis. Tyrosine 726 carries the post-translational modification Phosphotyrosine. Residues serine 737 and serine 742 each carry the phosphoserine; by PKC/PRKCA modification. Aspartate 788 serves as the catalytic Proton acceptor. Arginine 792 contacts ATP. Mg(2+)-binding residues include asparagine 793 and aspartate 806. Serine 817 is modified (phosphoserine). Phosphotyrosine; by autocatalysis is present on tyrosine 819. Serine 887 bears the Phosphoserine mark. Tyrosine 896 is subject to Phosphotyrosine. A Phosphotyrosine; by autocatalysis modification is found at tyrosine 932. Serine 955 is subject to Phosphoserine.

Belongs to the protein kinase superfamily. Tyr protein kinase family. CSF-1/PDGF receptor subfamily. In terms of assembly, monomer in the absence of bound KITLG/SCF. Homodimer in the presence of bound KITLG/SCF, forming a heterotetramer with two KITLG/SCF molecules. Interacts (via phosphorylated tyrosine residues) with the adapter proteins GRB2 and GRB7 (via SH2 domain), and SH2B2/APS. Interacts (via C-terminus) with MPDZ (via the tenth PDZ domain). Interacts (via phosphorylated tyrosine residues) with PIK3R1 and PIK3CD. Interacts (via phosphorylated tyrosine) with CRK (isoform Crk-II), FYN, SHC1 and MATK/CHK (via SH2 domain). Interacts with LYN and FES/FPS. Interacts (via phosphorylated tyrosine residues) with the protein phosphatases PTPN6/SHP-1 (via SH2 domain), PTPN11/SHP-2 (via SH2 domain) and PTPRU. Interacts with PLCG1. Interacts with DOK1 and TEC. Interacts with IL1RAP (independent of stimulation with KITLG/SCF). A mast cell-specific KITLG/SCF-induced interleukin-33 signaling complex contains IL1RL1, IL1RAP, KIT and MYD88. Ubiquitinated by SOCS6. KIT is rapidly ubiquitinated after autophosphorylation induced by KITLG/SCF binding, leading to internalization and degradation. In terms of processing, autophosphorylated on tyrosine residues. KITLG/SCF binding promotes autophosphorylation. Phosphorylated tyrosine residues are important for interaction with specific binding partners.

Its subcellular location is the cell membrane. It catalyses the reaction L-tyrosyl-[protein] + ATP = O-phospho-L-tyrosyl-[protein] + ADP + H(+). Present in an inactive conformation in the absence of bound ligand. KITLG/SCF binding leads to dimerization and activation by autophosphorylation on tyrosine residues. Activity is down-regulated by PRKCA-mediated phosphorylation on serine residues. Functionally, tyrosine-protein kinase that acts as a cell-surface receptor for the cytokine KITLG/SCF and plays an essential role in the regulation of cell survival and proliferation, hematopoiesis, stem cell maintenance, gametogenesis, mast cell development, migration and function, and in melanogenesis. In response to KITLG/SCF binding, KIT can activate several signaling pathways. Phosphorylates PIK3R1, PLCG1, SH2B2/APS and CBL. Activates the AKT1 signaling pathway by phosphorylation of PIK3R1, the regulatory subunit of phosphatidylinositol 3-kinase. Activated KIT also transmits signals via GRB2 and activation of RAS, RAF1 and the MAP kinases MAPK1/ERK2 and/or MAPK3/ERK1. Promotes activation of STAT family members STAT1, STAT3, STAT5A and STAT5B. Activation of PLCG1 leads to the production of the cellular signaling molecules diacylglycerol and inositol 1,4,5-trisphosphate. KIT signaling is modulated by protein phosphatases, and by rapid internalization and degradation of the receptor. Activated KIT promotes phosphorylation of the protein phosphatases PTPN6/SHP-1 and PTPRU, and of the transcription factors STAT1, STAT3, STAT5A and STAT5B. Promotes phosphorylation of PIK3R1, CBL, CRK (isoform Crk-II), LYN, MAPK1/ERK2 and/or MAPK3/ERK1, PLCG1, SRC and SHC1. The polypeptide is Mast/stem cell growth factor receptor Kit (KIT) (Callithrix jacchus (White-tufted-ear marmoset)).